We begin with the raw amino-acid sequence, 465 residues long: MAAQLQPYNIIETCHISPPKGTVASTTLPLTFFDAPWLSLPLADSLFFFSYQNSTESFLQDFVPNLKHSLSITLQHFFPYAGKLIIPPRPDPPYLHYNAGEDSLVFTVAESTETDFDQLKSDSPKDISVLHGVLPKLPPPHVSPEGIQMRPIMAMQVTIFPGAGICIGNSATHVVADGVTFSHFMKYWMSLTKSSGKDPATVLLPSLPIHSCRNIIKDPGEVAAGHLERFWSQNSAKHSSHVTPENMVRATFTLSRKQIDNLKSWVTEQSENQSPVSTFVVTLAFIWVSLIKTLVQDSETEAKDEVFHLMINVDCRNRLKYTQPIPQTYFGNCMAPGIVSVKKHDLLGEKCVMAASDAITARIKDMLSSDLLKTAPRWGQGVRKWVMSHYPTSIAGAPKLGLYDMDFGLGKPCKMEIVHIETGGSIAFSESRDGSNGVEIGIALEKKKMDVFDSLLQKGIKKFAT.

Residue M1 is modified to N-acetylmethionine. Residues H173 and D406 each act as proton acceptor in the active site.

Belongs to the plant acyltransferase family. As to expression, highly expressed in flowers, and leaves. Lower levels of expression in stems, roots and siliques.

Functionally, involved in the acylation of the 6'' position of the 3-O-glucose residue of anthocyanin. Also able to use flavonol 3-glucosides as the acyl acceptor. The protein is Coumaroyl-CoA:anthocyanidin 3-O-glucoside-6''-O-coumaroyltransferase 2 (3AT2) of Arabidopsis thaliana (Mouse-ear cress).